The sequence spans 113 residues: U11-theraphotoxin-Hhn1a (113 aa).

The signal sequence occupies residues 1-21 (MNTVRVTFLLVFVLAVSLGQA). A propeptide spanning residues 22 to 74 (DKDENRMEMQEKAEQGKSYLDFAENLLLQKLEELEAKLLEEDSEESRNSRQKR) is cleaved from the precursor. 3 cysteine pairs are disulfide-bonded: cysteine 75-cysteine 90, cysteine 82-cysteine 95, and cysteine 89-cysteine 110.

The protein belongs to the neurotoxin 14 (magi-1) family. 01 (HNTX-16) subfamily. As to expression, expressed by the venom gland.

It is found in the secreted. Probable ion channel inhibitor. The sequence is that of U11-theraphotoxin-Hhn1a from Cyriopagopus hainanus (Chinese bird spider).